A 194-amino-acid chain; its full sequence is Holliday junction branch migration complex subunit RuvA (194 aa).

Positions 1–64 (MISRLTGKLV…EDAHLLFGFA (64 aa)) are domain I. Residues 65-143 (TAEERKTFRQ…AHTVTDGLFA (79 aa)) form a domain II region. Residues 144 to 147 (ASPA) are flexible linker. Residues 147–194 (AADETEDIVSTLLALGYNEREAKAAVKGVPKGTDVGEGVRLALKNLLK) form a domain III region.

This sequence belongs to the RuvA family. As to quaternary structure, homotetramer. Forms an RuvA(8)-RuvB(12)-Holliday junction (HJ) complex. HJ DNA is sandwiched between 2 RuvA tetramers; dsDNA enters through RuvA and exits via RuvB. An RuvB hexamer assembles on each DNA strand where it exits the tetramer. Each RuvB hexamer is contacted by two RuvA subunits (via domain III) on 2 adjacent RuvB subunits; this complex drives branch migration. In the full resolvosome a probable DNA-RuvA(4)-RuvB(12)-RuvC(2) complex forms which resolves the HJ.

It localises to the cytoplasm. In terms of biological role, the RuvA-RuvB-RuvC complex processes Holliday junction (HJ) DNA during genetic recombination and DNA repair, while the RuvA-RuvB complex plays an important role in the rescue of blocked DNA replication forks via replication fork reversal (RFR). RuvA specifically binds to HJ cruciform DNA, conferring on it an open structure. The RuvB hexamer acts as an ATP-dependent pump, pulling dsDNA into and through the RuvAB complex. HJ branch migration allows RuvC to scan DNA until it finds its consensus sequence, where it cleaves and resolves the cruciform DNA. In Neisseria gonorrhoeae (strain ATCC 700825 / FA 1090), this protein is Holliday junction branch migration complex subunit RuvA.